The sequence spans 421 residues: Histidine--tRNA ligase (421 aa).

This sequence belongs to the class-II aminoacyl-tRNA synthetase family.

Its subcellular location is the cytoplasm. It carries out the reaction tRNA(His) + L-histidine + ATP = L-histidyl-tRNA(His) + AMP + diphosphate + H(+). This is Histidine--tRNA ligase from Pyrobaculum calidifontis (strain DSM 21063 / JCM 11548 / VA1).